Reading from the N-terminus, the 302-residue chain is MDQIRLTHLRQLEAESIHIIREVAAEFSNPVMLYSIGKDSSVMLHLARKAFYPGTLPFPLLHVDTGWKFREMYEFRDRTAKAYGCELLVHKNPEGVAMGINPFVHGSAKHTDIMKTEGLKQALNKYSFDAAFGGARRDEEKSRAKERIYSFRDRFHRWDPKNQRPELWHNYNGQINKGESIRVFPLSNWTEQDIWQYIWLENIDIVPLYLAAERPVLERDGMLMMIDDNRIDLQPGEVIKKRMVRFRTLGCWPLTGAVESNAQTLPEIIEEMLVSTTSERQGRVIDRDQAGSMELKKRQGYF.

This sequence belongs to the PAPS reductase family. CysD subfamily. Heterodimer composed of CysD, the smaller subunit, and CysN.

It catalyses the reaction sulfate + ATP + H(+) = adenosine 5'-phosphosulfate + diphosphate. The protein operates within sulfur metabolism; hydrogen sulfide biosynthesis; sulfite from sulfate: step 1/3. With CysN forms the ATP sulfurylase (ATPS) that catalyzes the adenylation of sulfate producing adenosine 5'-phosphosulfate (APS) and diphosphate, the first enzymatic step in sulfur assimilation pathway. APS synthesis involves the formation of a high-energy phosphoric-sulfuric acid anhydride bond driven by GTP hydrolysis by CysN coupled to ATP hydrolysis by CysD. The polypeptide is Sulfate adenylyltransferase subunit 2 (Escherichia coli O9:H4 (strain HS)).